We begin with the raw amino-acid sequence, 74 residues long: RNA-binding protein Hfq (74 aa).

A Sm domain is found at 9 to 69 (DQFLNQLRKE…ISTFAPQKNV (61 aa)).

It belongs to the Hfq family. As to quaternary structure, homohexamer.

RNA chaperone that binds small regulatory RNA (sRNAs) and mRNAs to facilitate mRNA translational regulation in response to envelope stress, environmental stress and changes in metabolite concentrations. Also binds with high specificity to tRNAs. In Anoxybacillus flavithermus (strain DSM 21510 / WK1), this protein is RNA-binding protein Hfq.